We begin with the raw amino-acid sequence, 21 residues long: MFFKIDLKNHPYLIRLKKQEE.

The protein to yeast fimbrin. The N-terminus is blocked.

Binds directly to F-actin and induces actin filament bundling. May function as a regulator of actin filament organization. This chain is 71 kDa F-actin-binding protein, found in Tetrahymena pyriformis.